The sequence spans 266 residues: Diphthine synthase (266 aa).

Residues L9, D84, V87, 112 to 113, L169, A210, and H235 contribute to the S-adenosyl-L-methionine site; that span reads SI.

Belongs to the diphthine synthase family. In terms of assembly, homodimer.

The catalysed reaction is 2-[(3S)-amino-3-carboxypropyl]-L-histidyl-[translation elongation factor 2] + 3 S-adenosyl-L-methionine = diphthine-[translation elongation factor 2] + 3 S-adenosyl-L-homocysteine + 3 H(+). Its pathway is protein modification; peptidyl-diphthamide biosynthesis. S-adenosyl-L-methionine-dependent methyltransferase that catalyzes the trimethylation of the amino group of the modified target histidine residue in translation elongation factor 2 (EF-2), to form an intermediate called diphthine. The three successive methylation reactions represent the second step of diphthamide biosynthesis. This chain is Diphthine synthase, found in Methanosarcina acetivorans (strain ATCC 35395 / DSM 2834 / JCM 12185 / C2A).